The primary structure comprises 642 residues: Fork head protein homolog 2 (642 aa).

Positions 1–23 (MTVRRLESKSEHISDDEERKEQL) are disordered. The FHA domain maps to 96 to 160 (IILGREPANP…NGIKVDGKLF (65 aa)). The fork-head DNA-binding region spans 223-318 (KPPYSYSVMI…AKTRKTPRKR (96 aa)). The span at 310–319 (KTRKTPRKRS) shows a compositional bias: basic residues. Disordered stretches follow at residues 310 to 392 (KTRK…ETYK), 519 to 574 (VSDS…TEEN), and 586 to 642 (ATME…KSSA). Phosphoserine occurs at positions 319, 321, 322, 334, and 336. Residues 348-362 (TSIPAAEPASSTTSA) are compositionally biased toward low complexity. 3 stretches are compositionally biased toward polar residues: residues 363–381 (RDQT…TAET), 519–552 (VSDS…SANK), and 599–642 (TPTS…KSSA). Residues Ser375, Ser535, and Ser626 each carry the phosphoserine modification.

In terms of processing, phosphorylated. Occurs periodically during mitosis.

It localises to the nucleus. In terms of biological role, required for promoter sequence element PCB-driven, M-phase-specific transcription. Acts as a transcriptional activator with a role in the regulation of mitosis. Binds, cooperatively with mcm1, the CLB cluster regulatory elements throughout the cell cycle. Regulates the periodic transcription of cdc15 and spo12. Required for the correct timing, positioning and contraction of the division septum. The sequence is that of Fork head protein homolog 2 (fkh2) from Schizosaccharomyces pombe (strain 972 / ATCC 24843) (Fission yeast).